The sequence spans 394 residues: Acid ceramidase (394 aa).

An N-terminal signal peptide occupies residues 1–20 (MLGRSLLTWVLAAAVTCAQA). A disulfide bridge links C30 with C339. C142 functions as the Nucleophile in the catalytic mechanism. Residues N194, N258, N285, and N341 are each glycosylated (N-linked (GlcNAc...) asparagine). The cysteines at positions 387 and 391 are disulfide-linked.

It belongs to the acid ceramidase family. Heterodimer; disulfide-linked. The heterodimer is composed of the disulfide-linked alpha and beta chains produced by autocatalytic cleavage of the precursor. Post-translationally, N-glycosylated. In terms of processing, proteolytically cleaved into two chains alpha and beta that remain associated via a disulfide bond. Cleavage gives rise to a conformation change that activates the enzyme. The same catalytic Cys residue mediates the autoproteolytic cleavage and subsequent hydrolysis of lipid substrates. The beta chain may undergo an additional C-terminal processing.

The protein resides in the lysosome. Its subcellular location is the secreted. It catalyses the reaction an N-acylsphing-4-enine + H2O = sphing-4-enine + a fatty acid. It carries out the reaction N-dodecanoylsphing-4-enine + H2O = dodecanoate + sphing-4-enine. The catalysed reaction is N-tetradecanoylsphing-4-enine + H2O = tetradecanoate + sphing-4-enine. The enzyme catalyses N-hexadecanoylsphing-4-enine + H2O = sphing-4-enine + hexadecanoate. It catalyses the reaction N-octadecanoylsphing-4-enine + H2O = sphing-4-enine + octadecanoate. It carries out the reaction N-dodecanoyl-(4R)-hydroxysphinganine + H2O = (4R)-hydroxysphinganine + dodecanoate. The catalysed reaction is N-(dodecanoyl)-sphinganine + H2O = dodecanoate + sphinganine. The enzyme catalyses N-(acetyl)-sphing-4-enine + H2O = sphing-4-enine + acetate. It catalyses the reaction N-(hexanoyl)sphing-4-enine + H2O = hexanoate + sphing-4-enine. It carries out the reaction N-octanoylsphing-4-enine + H2O = octanoate + sphing-4-enine. The catalysed reaction is N-(9Z-octadecenoyl)-sphing-4-enine + H2O = sphing-4-enine + (9Z)-octadecenoate. The enzyme catalyses N-dodecanoylethanolamine + H2O = dodecanoate + ethanolamine. Its pathway is lipid metabolism; sphingolipid metabolism. Functionally, lysosomal ceramidase that hydrolyzes sphingolipid ceramides into sphingosine and free fatty acids at acidic pH. Ceramides, sphingosine, and its phosphorylated form sphingosine-1-phosphate are bioactive lipids that mediate cellular signaling pathways regulating several biological processes including cell proliferation, apoptosis and differentiation. Has a higher catalytic efficiency towards C12-ceramides versus other ceramides. Also catalyzes the reverse reaction allowing the synthesis of ceramides from fatty acids and sphingosine. For the reverse synthetic reaction, the natural sphingosine D-erythro isomer is more efficiently utilized as a substrate compared to D-erythro-dihydrosphingosine and D-erythro-phytosphingosine, while the fatty acids with chain lengths of 12 or 14 carbons are the most efficiently used. Also has an N-acylethanolamine hydrolase activity. By regulating the levels of ceramides, sphingosine and sphingosine-1-phosphate in the epidermis, mediates the calcium-induced differentiation of epidermal keratinocytes. Also indirectly regulates tumor necrosis factor/TNF-induced apoptosis. By regulating the intracellular balance between ceramides and sphingosine, in adrenocortical cells, probably also acts as a regulator of steroidogenesis. The sequence is that of Acid ceramidase from Rattus norvegicus (Rat).